The sequence spans 131 residues: Small ribosomal subunit protein uS8 (131 aa).

This sequence belongs to the universal ribosomal protein uS8 family. In terms of assembly, part of the 30S ribosomal subunit. Contacts proteins S5 and S12.

Its function is as follows. One of the primary rRNA binding proteins, it binds directly to 16S rRNA central domain where it helps coordinate assembly of the platform of the 30S subunit. This chain is Small ribosomal subunit protein uS8, found in Chlorobium phaeobacteroides (strain DSM 266 / SMG 266 / 2430).